A 312-amino-acid chain; its full sequence is Olfactory receptor 10K2 (312 aa).

Over 1–25 the chain is Extracellular; it reads MERVNETVVREVIFLGFSSLARLQQ. Asn5 carries N-linked (GlcNAc...) asparagine glycosylation. Residues 26–46 traverse the membrane as a helical segment; sequence LLFVIFLLLYLFTLGTNAIII. Over 47–54 the chain is Cytoplasmic; the sequence is STIVLDRA. A helical membrane pass occupies residues 55 to 75; it reads LHIPMYFFLAILSCSEICYTF. The Extracellular segment spans residues 76–99; it reads IIVPKMLVDLLSQKKTISFLGCAI. The chain crosses the membrane as a helical span at residues 100–120; it reads QMFSFLFLGCSHSFLLAVMGY. At 121–139 the chain is on the cytoplasmic side; the sequence is DRYIAICNPLRYSVLMGHG. Residues 140 to 160 traverse the membrane as a helical segment; sequence VCMGLVAAACACGFTVAQIIT. The Extracellular portion of the chain corresponds to 161–197; it reads SLVFHLPFYSSNQLHHFFCDIAPVLKLASHHNHFSQI. A helical transmembrane segment spans residues 198 to 217; the sequence is VIFMLCTLVLAIPLLLILVS. Topologically, residues 218–237 are cytoplasmic; that stretch reads YVHILSAILQFPSTLGRCKA. The chain crosses the membrane as a helical span at residues 238-258; it reads FSTCVSHLIIVTVHYGCASFI. The Extracellular portion of the chain corresponds to 259–271; that stretch reads YLRPQSNYSSSQD. N-linked (GlcNAc...) asparagine glycosylation occurs at Asn265. Residues 272-292 traverse the membrane as a helical segment; it reads ALISVSYTIITPLFNPMIYSL. At 293–312 the chain is on the cytoplasmic side; it reads RNKEFKSALCKIVRRTISLL.

It belongs to the G-protein coupled receptor 1 family.

It localises to the cell membrane. In terms of biological role, odorant receptor. This Homo sapiens (Human) protein is Olfactory receptor 10K2 (OR10K2).